The sequence spans 109 residues: Protein reprimo (109 aa).

2 N-linked (GlcNAc...) asparagine glycosylation sites follow: asparagine 7 and asparagine 18. A helical transmembrane segment spans residues 56-76 (VVQIAVMCVLSLTVVFGIFFL). Position 98 is a phosphoserine (serine 98).

Belongs to the reprimo family.

It is found in the cytoplasm. The protein resides in the membrane. In terms of biological role, may be involved in the regulation of p53-dependent G2 arrest of the cell cycle. Seems to induce cell cycle arrest by inhibiting CDK1 activity and nuclear translocation of the CDC2 cyclin B1 complex. The sequence is that of Protein reprimo (Rprm) from Mus musculus (Mouse).